Consider the following 871-residue polypeptide: Translation initiation factor IF-2 (871 aa).

The interval 1 to 242 (MVDTKNPGDK…PAAKPAPAKQ (242 aa)) is disordered. The span at 68-91 (PASARTPAAKAPPARAATPAAPRA) shows a compositional bias: low complexity. Residues 115-174 (AKVRAEEERRIAEAEAARRNSKEGIEQAEREAAEARRKAEEERHRQEEEAKRKAEIEAKR) show a composition bias toward basic and acidic residues. Composition is skewed to low complexity over residues 182-206 (KPAP…AVAA) and 225-241 (ARPV…APAK). One can recognise a tr-type G domain in the interval 367-538 (PRSPVVTVMG…SLQADLLDLK (172 aa)). The interval 376–383 (GHVDHGKT) is G1. 376 to 383 (GHVDHGKT) serves as a coordination point for GTP. Positions 401–405 (GITQH) are G2. Residues 424–427 (DTPG) are G3. GTP is bound by residues 424–428 (DTPGH) and 478–481 (NKID). The G4 stretch occupies residues 478-481 (NKID). Residues 514 to 516 (SAK) are G5.

This sequence belongs to the TRAFAC class translation factor GTPase superfamily. Classic translation factor GTPase family. IF-2 subfamily.

It localises to the cytoplasm. One of the essential components for the initiation of protein synthesis. Protects formylmethionyl-tRNA from spontaneous hydrolysis and promotes its binding to the 30S ribosomal subunits. Also involved in the hydrolysis of GTP during the formation of the 70S ribosomal complex. The chain is Translation initiation factor IF-2 from Nitrobacter winogradskyi (strain ATCC 25391 / DSM 10237 / CIP 104748 / NCIMB 11846 / Nb-255).